Consider the following 156-residue polypeptide: Arginine repressor (156 aa).

Belongs to the ArgR family.

Its subcellular location is the cytoplasm. It participates in amino-acid biosynthesis; L-arginine biosynthesis [regulation]. Regulates arginine biosynthesis genes. This is Arginine repressor from Shewanella oneidensis (strain ATCC 700550 / JCM 31522 / CIP 106686 / LMG 19005 / NCIMB 14063 / MR-1).